The sequence spans 687 residues: C-mannosyltransferase dpy-19 (687 aa).

11 helical membrane passes run 24–44 (GISGNLWLATVVLIGLFVGFL), 170–190 (ITGVFVVAGTVATSLFYLGVL), 191–211 (VSDSIFGGILSVLCFAFNHGE), 223–243 (ESFAFPFIIGHIAILTYIIKY), 253–273 (LLISAAVPALLFWQFTQFAFF), 276–296 (ICSIFAAFSMDLVPLDTAKTI), 303–323 (AFFISFVMLFGNEMMIAALYF), 324–344 (PSIWALATVIYISPMLAGIRL), 347–367 (LYLLILALIFGSITLGLKVGF), 415–435 (LSSTLLIPLALLSIGAFSWDF), and 454–474 (GEVIYNLVQLICSTTMAVLIM).

It belongs to the dpy-19 family.

Its subcellular location is the endoplasmic reticulum membrane. In terms of biological role, C-mannosyltransferase that mediates C-mannosylation of tryptophan residues on target proteins such as unc-5 and mig-21. Mediates the attachment of alpha-mannose in C-C linkage to the C2 of the indole ring of tryptophan. C-mannosylation takes place in the endoplasmic reticulum and frequently found in thrombospondin (TSP) type-1 repeats and in the WSXWS motif of type I cytokine receptors. Required to orient neuroblasts QL and QR correctly on the anterior/posterior (A/P) axis: QL and QR are born in the same A/P position, but polarize and migrate left/right asymmetrically, QL migrates toward the posterior and QR migrates toward the anterior. Required with unc-40 to express mab-5 correctly in the Q cell descendants. The chain is C-mannosyltransferase dpy-19 from Caenorhabditis briggsae.